We begin with the raw amino-acid sequence, 363 residues long: Fructose-1,6-bisphosphate aldolase/phosphatase (363 aa).

Residue D11 is the Proton acceptor; for FBP phosphatase activity of the active site. The Mg(2+) site is built by D11, H18, D51, and D52. H18 serves as a coordination point for beta-D-fructose 1,6-bisphosphate. H18 provides a ligand contact to dihydroxyacetone phosphate. A beta-D-fructose 1,6-bisphosphate-binding site is contributed by Y89. Q93 is a binding site for Mg(2+). Residue 102–103 (GN) participates in beta-D-fructose 1,6-bisphosphate binding. Mg(2+) is bound at residue D130. Beta-D-fructose 1,6-bisphosphate is bound at residue K131. K131 contacts dihydroxyacetone phosphate. Y230 acts as the Proton donor/acceptor; for FBP aldolase activity in catalysis. Positions 233, 234, and 235 each coordinate Mg(2+). K233 (schiff-base intermediate with DHAP; for FBP aldolase activity) is an active-site residue. Residues 243-244 (QK), R267, and Y348 contribute to the beta-D-fructose 1,6-bisphosphate site. Residue R267 participates in dihydroxyacetone phosphate binding.

It belongs to the FBP aldolase/phosphatase family. Homooctamer; dimer of tetramers. Requires Mg(2+) as cofactor.

It carries out the reaction beta-D-fructose 1,6-bisphosphate + H2O = beta-D-fructose 6-phosphate + phosphate. The enzyme catalyses beta-D-fructose 1,6-bisphosphate = D-glyceraldehyde 3-phosphate + dihydroxyacetone phosphate. The protein operates within carbohydrate biosynthesis; gluconeogenesis. Its function is as follows. Catalyzes two subsequent steps in gluconeogenesis: the aldol condensation of dihydroxyacetone phosphate (DHAP) and glyceraldehyde-3-phosphate (GA3P) to fructose-1,6-bisphosphate (FBP), and the dephosphorylation of FBP to fructose-6-phosphate (F6P). The chain is Fructose-1,6-bisphosphate aldolase/phosphatase from Thermus thermophilus (strain ATCC BAA-163 / DSM 7039 / HB27).